The primary structure comprises 397 residues: Lysophospholipid transporter LplT (397 aa).

The Periplasmic portion of the chain corresponds to 1–17 (MSESVHTNTSLWSKGMK). The chain crosses the membrane as a helical span at residues 18 to 38 (AVIVAQFLSAFGDNALLFATL). At 39–52 (ALLKAQFYPEWSQP) the chain is on the cytoplasmic side. A helical membrane pass occupies residues 53–73 (ILQMVFVGAYILFAPFVGQVA). Topologically, residues 74–90 (DSFAKGRVMMFANGLKL) are periplasmic. Residues 91–111 (LGAASICFGINPFLGYTLVGV) form a helical membrane-spanning segment. The Cytoplasmic segment spans residues 112-144 (GAAAYSPAKYGILGELTTGSKLVKANGLMEAST). Residues 145-165 (IAAILLGSVAGGVLADWHVLV) traverse the membrane as a helical segment. Position 166 (Ala-166) is a topological domain, periplasmic. A helical transmembrane segment spans residues 167-187 (LAACALAYGGAVVANIYIPKL). The Cytoplasmic segment spans residues 188 to 226 (AAARPGQSWNLINMTRSFLNACTSLWRNGETRFSLVGTS). Residues 227–247 (LFWGAGVTLRFLLVLWVPVAL) traverse the membrane as a helical segment. The Periplasmic portion of the chain corresponds to 248-256 (GITDNATPT). Residues 257 to 277 (YLNAMVAIGIVVGAGAAAKLV) traverse the membrane as a helical segment. Residues 278 to 280 (TLE) lie on the Cytoplasmic side of the membrane. A helical membrane pass occupies residues 281–301 (TVSRCMPAGILIGVVVLIFSL). Over 302 to 304 (QHE) the chain is Periplasmic. A helical membrane pass occupies residues 305–325 (QLPAYALLMLIGVLGGFFVVP). The Cytoplasmic portion of the chain corresponds to 326-343 (LNALLQERGKKSVGAGNA). The chain crosses the membrane as a helical span at residues 344–364 (IAVQNLGENSAMLLMLGIYSL). At 365-366 (AV) the chain is on the periplasmic side. The chain crosses the membrane as a helical span at residues 367–387 (MVGIPVVPIGIGFGALFALAI). Residues 388 to 397 (TALWIWQRRH) lie on the Cytoplasmic side of the membrane.

It belongs to the major facilitator superfamily. LplT (TC 2.A.1.42) family.

The protein localises to the cell inner membrane. Catalyzes the facilitated diffusion of 2-acyl-glycero-3-phosphoethanolamine (2-acyl-GPE) into the cell. The sequence is that of Lysophospholipid transporter LplT from Escherichia coli O157:H7 (strain EC4115 / EHEC).